Consider the following 302-residue polypeptide: Recombination-associated protein RdgC (302 aa).

The protein belongs to the RdgC family.

The protein localises to the cytoplasm. It localises to the nucleoid. Functionally, may be involved in recombination. The sequence is that of Recombination-associated protein RdgC from Haemophilus influenzae (strain PittGG).